The primary structure comprises 295 residues: Mycothiol acetyltransferase (295 aa).

Glu30 contacts 1D-myo-inositol 2-(L-cysteinylamino)-2-deoxy-alpha-D-glucopyranoside. 62 to 64 contributes to the acetyl-CoA binding site; the sequence is LVV. The N-acetyltransferase domain occupies 137–295; it reads VTVRAFRADS…DDDTHVQYRR (159 aa). Residues Glu165, Lys209, and Glu227 each contribute to the 1D-myo-inositol 2-(L-cysteinylamino)-2-deoxy-alpha-D-glucopyranoside site. Residues 231–233 and 238–244 each bind acetyl-CoA; these read VGI and QGRGLGK. Tyr265 is a 1D-myo-inositol 2-(L-cysteinylamino)-2-deoxy-alpha-D-glucopyranoside binding site.

This sequence belongs to the acetyltransferase family. MshD subfamily. Monomer.

It carries out the reaction 1D-myo-inositol 2-(L-cysteinylamino)-2-deoxy-alpha-D-glucopyranoside + acetyl-CoA = mycothiol + CoA + H(+). Functionally, catalyzes the transfer of acetyl from acetyl-CoA to desacetylmycothiol (Cys-GlcN-Ins) to form mycothiol. The protein is Mycothiol acetyltransferase of Nocardioides sp. (strain ATCC BAA-499 / JS614).